The sequence spans 307 residues: MSMDIVERINKLKEEKNAVILAHNYQPKEIQKIADFLGDSLELCIKAKETDADIIVFCGVDFMGESAKILNPEKKVLMPEIEGTQCPMAHQLPPEIIKKYRELYPEAPLVVYVNTTAETKALADITCTSANADRVVNSLDADTVLFGPDNNLAYYVQKRTDKKVIAIPEGGGCYVHKKFTIDDLKRVKSKYPNAKVLIHPECSPELQDNADYIASTSGILRIVLESDDEEFIIGTEVGMINRLEIELEKLGKKKTLIPLRKDAICHEMKRITLEKIEKCLLEERYEIKLEKEIIEKAQKAIERMLRI.

Iminosuccinate is bound by residues histidine 23 and serine 40. Cysteine 86 provides a ligand contact to [4Fe-4S] cluster. Iminosuccinate is bound by residues 112-114 and serine 129; that span reads YVN. Cysteine 173 provides a ligand contact to [4Fe-4S] cluster. Iminosuccinate is bound by residues 199-201 and threonine 216; that span reads HPE. [4Fe-4S] cluster is bound at residue cysteine 265.

This sequence belongs to the quinolinate synthase family. Type 2 subfamily. Requires [4Fe-4S] cluster as cofactor.

It is found in the cytoplasm. It carries out the reaction iminosuccinate + dihydroxyacetone phosphate = quinolinate + phosphate + 2 H2O + H(+). The protein operates within cofactor biosynthesis; NAD(+) biosynthesis; quinolinate from iminoaspartate: step 1/1. In terms of biological role, catalyzes the condensation of iminoaspartate with dihydroxyacetone phosphate to form quinolinate. The protein is Quinolinate synthase of Methanocaldococcus jannaschii (strain ATCC 43067 / DSM 2661 / JAL-1 / JCM 10045 / NBRC 100440) (Methanococcus jannaschii).